A 1249-amino-acid polypeptide reads, in one-letter code: Clustered mitochondria protein homolog (1249 aa).

Residues 1–34 (MAQTNGELEHSKAETPEQLTNGNHPEETQEEEQN) are disordered. In terms of domain architecture, Clu spans 321–565 (DITRSQENYL…RVTPLDVMWQ (245 aa)). Disordered regions lie at residues 610–638 (VETA…EALD) and 874–907 (VPAT…PEKP). Residues 613–638 (ASKEKSEENAESKEEGSEEKSEEALD) are compositionally biased toward basic and acidic residues. 3 TPR repeats span residues 975-1008 (AKLY…TERT), 1017-1050 (ILSY…WKII), and 1059-1092 (ITTM…CESL). Residues 1178 to 1191 (TRTLGTKVQPQVGQ) are compositionally biased toward polar residues. The disordered stretch occupies residues 1178 to 1249 (TRTLGTKVQP…KLRGSKKSSA (72 aa)). The segment covering 1192 to 1205 (SAPSASGASSANPS) has biased composition (low complexity).

Belongs to the CLU family. May associate with the eukaryotic translation initiation factor 3 (eIF-3) complex.

It localises to the cytoplasm. Functionally, mRNA-binding protein involved in proper cytoplasmic distribution of mitochondria. This is Clustered mitochondria protein homolog from Aspergillus oryzae (strain ATCC 42149 / RIB 40) (Yellow koji mold).